The primary structure comprises 450 residues: MEMMGMENIQQNQGLKQKDEQFVWHAMKGAHQADSLIAQKAEGAWVTDTDGRRYLDAMSGLWCVNIGYGRKELAEAAYEQLKELPYYPLTQSHAPAIQLAEKLNEWLGGDYVIFFSNSGSEANETAFKIARQYHLQNGDHSRYKFISRYRAYHGNTLGALSATGQAQRKYKYEPLSQGFLHAAPPDIYRNPDDADTLESANEIDRIMTWELSETIAGVIMEPIITGGGILMPPDGYMKKVEDICRRHGALLICDEVICGFGRTGEPFGFMHYGVKPDIITMAKGITSAYLPLSATAVKRDIFEAYQGEAPYDRFRHVNTFGGSPAACALALKNLQIMEDEQLIQRSRDLGAKLLGELQALREHPAVGDVRGKGLLIGIELVKDKLTKEPADAAKVNQVVAACKEKGLIIGKNGDTVAGYNNVIQLAPPFCLTEEDLSFIVKTVKESFQTI.

An N6-(pyridoxal phosphate)lysine modification is found at lysine 283.

Belongs to the class-III pyridoxal-phosphate-dependent aminotransferase family. Pyridoxal 5'-phosphate is required as a cofactor.

Its function is as follows. Essential for glycerol catabolism. This is an uncharacterized protein from Bacillus subtilis (strain 168).